We begin with the raw amino-acid sequence, 459 residues long: Arginine biosynthesis bifunctional protein ArgJ, mitochondrial (459 aa).

The substrate site is built by Thr-187, Lys-216, Thr-227, Glu-314, Asn-454, and Thr-459. Catalysis depends on Thr-227, which acts as the Nucleophile.

Belongs to the ArgJ family. In terms of assembly, heterodimer of an alpha and a beta chain. In terms of processing, the alpha and beta chains are autoproteolytically processed from a single precursor protein within the mitochondrion.

It localises to the mitochondrion matrix. The enzyme catalyses N(2)-acetyl-L-ornithine + L-glutamate = N-acetyl-L-glutamate + L-ornithine. It carries out the reaction L-glutamate + acetyl-CoA = N-acetyl-L-glutamate + CoA + H(+). It participates in amino-acid biosynthesis; L-arginine biosynthesis; L-ornithine and N-acetyl-L-glutamate from L-glutamate and N(2)-acetyl-L-ornithine (cyclic): step 1/1. Its pathway is amino-acid biosynthesis; L-arginine biosynthesis; N(2)-acetyl-L-ornithine from L-glutamate: step 1/4. In terms of biological role, catalyzes two activities which are involved in the cyclic version of arginine biosynthesis: the synthesis of acetylglutamate from glutamate and acetyl-CoA, and of ornithine by transacetylation between acetylornithine and glutamate. This chain is Arginine biosynthesis bifunctional protein ArgJ, mitochondrial, found in Uncinocarpus reesii (strain UAMH 1704).